The following is a 510-amino-acid chain: Light-independent protochlorophyllide reductase subunit B (510 aa).

Residue aspartate 36 participates in [4Fe-4S] cluster binding. The active-site Proton donor is the aspartate 296. A substrate-binding site is contributed by 431-432; that stretch reads GM.

This sequence belongs to the ChlB/BchB/BchZ family. Protochlorophyllide reductase is composed of three subunits; ChlL, ChlN and ChlB. Forms a heterotetramer of two ChlB and two ChlN subunits. [4Fe-4S] cluster is required as a cofactor.

It is found in the plastid. The protein resides in the chloroplast. The enzyme catalyses chlorophyllide a + oxidized 2[4Fe-4S]-[ferredoxin] + 2 ADP + 2 phosphate = protochlorophyllide a + reduced 2[4Fe-4S]-[ferredoxin] + 2 ATP + 2 H2O. It functions in the pathway porphyrin-containing compound metabolism; chlorophyll biosynthesis (light-independent). Functionally, component of the dark-operative protochlorophyllide reductase (DPOR) that uses Mg-ATP and reduced ferredoxin to reduce ring D of protochlorophyllide (Pchlide) to form chlorophyllide a (Chlide). This reaction is light-independent. The NB-protein (ChlN-ChlB) is the catalytic component of the complex. The sequence is that of Light-independent protochlorophyllide reductase subunit B from Angiopteris evecta (Mule's foot fern).